The chain runs to 632 residues: uncharacterized protein (632 aa).

Transmembrane regions (helical) follow at residues 255-275 (LFYA…ELRV), 506-526 (IALL…LTSI), 566-586 (MIFA…SMVF), and 603-623 (IVVI…AVLF).

It localises to the cell membrane. This is an uncharacterized protein from Mycoplasma pneumoniae (strain ATCC 29342 / M129 / Subtype 1) (Mycoplasmoides pneumoniae).